Reading from the N-terminus, the 47-residue chain is Alpha-conotoxin VxXXC (47 aa).

P10, P21, and P29 each carry hydroxyproline; partial. Disulfide bonds link C18/C27, C23/C35, C28/C45, and C33/C47.

In terms of assembly, homodimer. Pseudo-homodimer (identical sequence, different post-translational modifications). In terms of processing, hydroxyPro-10 is only found in a minor form. In terms of tissue distribution, expressed by the venom duct.

The protein resides in the secreted. In terms of biological role, alpha-conotoxins act on postsynaptic membranes, they bind to the nicotinic acetylcholine receptors (nAChR) and thus inhibit them. Through its two C-terminal domains, this homodimeric protein would bind to two nAChR allosteric sites, located outside the nAChR C-loop of the principal binding face and at the adjacent binding interface in a clockwise direction. This toxin specifically blocks mammalian neuronal nAChR of the alpha-7/CHRNA7, alpha-3-beta-2/CHRNA3-CHRNB2 and alpha-4-beta-2/CHRNA4-CHRNB2 subtypes. VxXXA and VxXXB inhibit alpha-7/CHRNA7 and alpha-3-beta-2/CHRNA3-CHRNB2 nAChR more efficiently than VxXXC. VxXXB is the most effective at inhibiting alpha-4-beta-2/CHRNA4-CHRNB2 nAChR, followed by VxXXC and VxXXA. In Conus vexillum (Flag cone), this protein is Alpha-conotoxin VxXXC.